Here is a 90-residue protein sequence, read N- to C-terminus: Large ribosomal subunit protein bL27 (90 aa).

A disordered region spans residues Met1–Gly22.

It belongs to the bacterial ribosomal protein bL27 family.

This is Large ribosomal subunit protein bL27 from Allorhizobium ampelinum (strain ATCC BAA-846 / DSM 112012 / S4) (Agrobacterium vitis (strain S4)).